Here is a 41-residue protein sequence, read N- to C-terminus: Large ribosomal subunit protein bL36 (41 aa).

Belongs to the bacterial ribosomal protein bL36 family.

The protein is Large ribosomal subunit protein bL36 of Xylella fastidiosa (strain M23).